A 170-amino-acid polypeptide reads, in one-letter code: Ecotin (170 aa).

Residues 1-21 (MNKASVVFSGLLMAVSASAIA) form the signal peptide. Cysteines 78 and 115 form a disulfide.

Belongs to the protease inhibitor I11 (ecotin) family. As to quaternary structure, homodimer.

Its subcellular location is the periplasm. In terms of biological role, general inhibitor of pancreatic serine proteases: inhibits chymotrypsin, trypsin, elastases, factor X, kallikrein as well as a variety of other proteases. The sequence is that of Ecotin from Serratia proteamaculans (strain 568).